We begin with the raw amino-acid sequence, 418 residues long: Aminodeoxyfutalosine deaminase (418 aa).

Zn(2+) is bound by residues His-97 and His-99. The substrate site is built by Glu-173 and His-211. A Zn(2+)-binding site is contributed by His-238. Glu-241 functions as the Proton donor in the catalytic mechanism. Asp-352 serves as a coordination point for Zn(2+).

This sequence belongs to the metallo-dependent hydrolases superfamily. It depends on Zn(2+) as a cofactor.

The catalysed reaction is 6-amino-6-deoxyfutalosine + H2O + H(+) = futalosine + NH4(+). It functions in the pathway quinol/quinone metabolism; menaquinone biosynthesis. Catalyzes the deamination of aminodeoxyfutalosine (AFL) into futalosine (FL). To a lesser extent, can also deaminate 5'-deoxyadenosine, 5'-methylthioadenosine, 2'-deoxyadenosine, adenosine, 1-(6-amino-9H-purin-9-yl)-1-deoxy-N-ethyl-beta-D-ribofuranuronamide (NECA), and S-adenosylhomocysteine. This Deinococcus radiodurans (strain ATCC 13939 / DSM 20539 / JCM 16871 / CCUG 27074 / LMG 4051 / NBRC 15346 / NCIMB 9279 / VKM B-1422 / R1) protein is Aminodeoxyfutalosine deaminase.